A 377-amino-acid polypeptide reads, in one-letter code: Interferon gamma receptor 1 (377 aa).

Positions 1–23 (MRTQIYISVTVLILLLKKSDLEA) are cleaved as a signal peptide. Residues 24 to 235 (VRVPSPESVS…IRRYTPFTVY (212 aa)) lie on the Extracellular side of the membrane. A Fibronectin type-III domain is found at 26 to 117 (VPSPESVSVQ…DFFIFSFNEN (92 aa)). N-linked (GlcNAc...) asparagine glycosylation is found at Asn78 and Asn186. The chain crosses the membrane as a helical span at residues 236–256 (LYPVLGVTLTLLFITGIIILL). The Cytoplasmic portion of the chain corresponds to 257–377 (EKKCNSEMKK…TVDSYGPRLL (121 aa)). The interval 326 to 377 (VYSEDKNSYGPNDLVEDEQSDLSDFYDCPHAPKQKREMSPGDTVDSYGPRLL) is disordered.

Belongs to the type II cytokine receptor family. Highly expressed in spleen. Also detected in brain, kidney, gill, intestine and heart. Expressed at very low levels in muscle. In immune cell populations, shows highest expression in monocytes, and slightly lower expression in peripheral blood leukocytes, splenocytes, neutrophils and mature macrophages.

It is found in the cell membrane. Its function is as follows. Receptor which shows binding specificity for the cytokine ifng1r (interferon gamma-related). This is Interferon gamma receptor 1 from Carassius auratus (Goldfish).